Reading from the N-terminus, the 124-residue chain is Histone H2A (124 aa).

The segment covering 1-18 has biased composition (basic residues); that stretch reads MSGRGKSGKARTKAKSRS. The interval 1–21 is disordered; that stretch reads MSGRGKSGKARTKAKSRSSRA. Ser-2 bears the N-acetylserine mark. Ser-2 carries the post-translational modification Phosphoserine. Gln-104 carries the post-translational modification N5-methylglutamine. A Glycyl lysine isopeptide (Lys-Gly) (interchain with G-Cter in ubiquitin) cross-link involves residue Lys-119.

This sequence belongs to the histone H2A family. As to quaternary structure, the nucleosome is a histone octamer containing two molecules each of H2A, H2B, H3 and H4 assembled in one H3-H4 heterotetramer and two H2A-H2B heterodimers. The octamer wraps approximately 147 bp of DNA. Monoubiquitination of Lys-119 gives a specific tag for epigenetic transcriptional repression. In terms of processing, phosphorylation of Ser-2 directly represses transcription.

It is found in the nucleus. It localises to the chromosome. Its function is as follows. Core component of nucleosome. Nucleosomes wrap and compact DNA into chromatin, limiting DNA accessibility to the cellular machineries which require DNA as a template. Histones thereby play a central role in transcription regulation, DNA repair, DNA replication and chromosomal stability. DNA accessibility is regulated via a complex set of post-translational modifications of histones, also called histone code, and nucleosome remodeling. This is Histone H2A from Paracentrotus lividus (Common sea urchin).